We begin with the raw amino-acid sequence, 102 residues long: RNA-binding protein Hfq (102 aa).

One can recognise a Sm domain in the interval 9–68; it reads DPFLNALRRERVPVSIYLVNGIKLQGQIESFDQFVILLKNTVSQMVYKHAISTVVPSRPV. A disordered region spans residues 63–102; sequence VPSRPVSHHSNNAGGGASNNYHHGSNVQGSTAQQDSEETE. The span at 70 to 88 shows a compositional bias: low complexity; sequence HHSNNAGGGASNNYHHGSN.

Belongs to the Hfq family. Homohexamer.

RNA chaperone that binds small regulatory RNA (sRNAs) and mRNAs to facilitate mRNA translational regulation in response to envelope stress, environmental stress and changes in metabolite concentrations. Also binds with high specificity to tRNAs. In Salmonella choleraesuis (strain SC-B67), this protein is RNA-binding protein Hfq.